The primary structure comprises 151 residues: Putative membrane protein ORF10 (151 aa).

2 helical membrane-spanning segments follow: residues 7–23 and 107–123; these read LCLAFGVTLIVIVGVVV and GLVAAFNGFWLSFIIMY.

It is found in the membrane. This chain is Putative membrane protein ORF10 (ORF10), found in Ictalurid herpesvirus 1 (strain Auburn) (IcHV-1).